A 156-amino-acid polypeptide reads, in one-letter code: ATP synthase subunit b (156 aa).

Residues 12–32 (VAFFIFVLFCMKFVWPPVIAA) traverse the membrane as a helical segment.

Belongs to the ATPase B chain family. F-type ATPases have 2 components, F(1) - the catalytic core - and F(0) - the membrane proton channel. F(1) has five subunits: alpha(3), beta(3), gamma(1), delta(1), epsilon(1). F(0) has three main subunits: a(1), b(2) and c(10-14). The alpha and beta chains form an alternating ring which encloses part of the gamma chain. F(1) is attached to F(0) by a central stalk formed by the gamma and epsilon chains, while a peripheral stalk is formed by the delta and b chains.

It is found in the cell inner membrane. Functionally, f(1)F(0) ATP synthase produces ATP from ADP in the presence of a proton or sodium gradient. F-type ATPases consist of two structural domains, F(1) containing the extramembraneous catalytic core and F(0) containing the membrane proton channel, linked together by a central stalk and a peripheral stalk. During catalysis, ATP synthesis in the catalytic domain of F(1) is coupled via a rotary mechanism of the central stalk subunits to proton translocation. Its function is as follows. Component of the F(0) channel, it forms part of the peripheral stalk, linking F(1) to F(0). This chain is ATP synthase subunit b, found in Pseudomonas aeruginosa (strain UCBPP-PA14).